The following is a 297-amino-acid chain: Nucleotide-binding protein BURPS668_0577 (297 aa).

8 to 15 (GISGSGKS) lines the ATP pocket. 57 to 60 (DARS) is a GTP binding site.

Belongs to the RapZ-like family.

Functionally, displays ATPase and GTPase activities. This Burkholderia pseudomallei (strain 668) protein is Nucleotide-binding protein BURPS668_0577.